Consider the following 172-residue polypeptide: UPF0316 protein Clos_0555 (172 aa).

Helical transmembrane passes span 3 to 23 (ALLG…MATI), 34 to 54 (VIAA…IGKV), and 61 to 81 (PLNV…GIFL).

Belongs to the UPF0316 family.

The protein localises to the cell membrane. This Alkaliphilus oremlandii (strain OhILAs) (Clostridium oremlandii (strain OhILAs)) protein is UPF0316 protein Clos_0555.